Here is a 563-residue protein sequence, read N- to C-terminus: Arginine--tRNA ligase (563 aa).

Residues 121–131 (PNIAKPFSIGH) carry the 'HIGH' region motif.

This sequence belongs to the class-I aminoacyl-tRNA synthetase family. As to quaternary structure, monomer.

The protein resides in the cytoplasm. The catalysed reaction is tRNA(Arg) + L-arginine + ATP = L-arginyl-tRNA(Arg) + AMP + diphosphate. The protein is Arginine--tRNA ligase of Streptococcus pyogenes serotype M3 (strain ATCC BAA-595 / MGAS315).